A 323-amino-acid polypeptide reads, in one-letter code: Porphobilinogen deaminase (323 aa).

At C240 the chain carries S-(dipyrrolylmethanemethyl)cysteine.

Belongs to the HMBS family. As to quaternary structure, monomer. The cofactor is dipyrromethane.

It carries out the reaction 4 porphobilinogen + H2O = hydroxymethylbilane + 4 NH4(+). It participates in porphyrin-containing compound metabolism; protoporphyrin-IX biosynthesis; coproporphyrinogen-III from 5-aminolevulinate: step 2/4. Its function is as follows. Tetrapolymerization of the monopyrrole PBG into the hydroxymethylbilane pre-uroporphyrinogen in several discrete steps. This Sulfurovum sp. (strain NBC37-1) protein is Porphobilinogen deaminase.